We begin with the raw amino-acid sequence, 249 residues long: Probable amino-acid import ATP-binding protein YxeO (249 aa).

The 238-residue stretch at 2–239 folds into the ABC transporter domain; it reads ITVKNIRKAF…PKNERTKRFI (238 aa). Residue 34–41 coordinates ATP; the sequence is GPSGSGKS.

The protein belongs to the ABC transporter superfamily. In terms of assembly, the complex is composed of two ATP-binding proteins (YxeO), two transmembrane proteins (YxeN) and a solute-binding protein (YxeM).

The protein resides in the cell membrane. Its function is as follows. Probably part of the ABC transporter complex YxeMNO that could be involved in amino-acid import. May transport S-methylcysteine. Responsible for energy coupling to the transport system. In Bacillus subtilis (strain 168), this protein is Probable amino-acid import ATP-binding protein YxeO (yxeO).